The sequence spans 99 residues: METLTFEFPAGAPARGRALAGCVGSGDLEVLLEPAAGGALSIEVVTSVNGSGPRWQQLFARVFAAATAPAAAIRIHDFGATPGVVRLRLEQALEEAGHD.

Residue serine 25 is modified to O-(phosphoribosyl dephospho-coenzyme A)serine.

Belongs to the MdcC family. Covalently binds the prosthetic group of malonate decarboxylase.

The protein resides in the cytoplasm. In terms of biological role, subunit of malonate decarboxylase, it is an acyl carrier protein to which acetyl and malonyl thioester residues are bound via a 2'-(5''-phosphoribosyl)-3'-dephospho-CoA prosthetic group and turn over during the catalytic mechanism. The sequence is that of Malonate decarboxylase acyl carrier protein from Pseudomonas paraeruginosa (strain DSM 24068 / PA7) (Pseudomonas aeruginosa (strain PA7)).